The following is a 754-amino-acid chain: Probable galactinol--sucrose galactosyltransferase 1 (754 aa).

This sequence belongs to the glycosyl hydrolases 36 family.

The catalysed reaction is alpha-D-galactosyl-(1-&gt;3)-1D-myo-inositol + sucrose = raffinose + myo-inositol. Transglycosidase operating by a ping-pong reaction mechanism. Involved in the synthesis of raffinose, a major soluble carbohydrate in seeds, roots and tubers. The chain is Probable galactinol--sucrose galactosyltransferase 1 (RFS1) from Arabidopsis thaliana (Mouse-ear cress).